The chain runs to 115 residues: Aspartate 1-decarboxylase (115 aa).

Ser25 (schiff-base intermediate with substrate; via pyruvic acid) is an active-site residue. Pyruvic acid (Ser) is present on Ser25. Position 57 (Thr57) interacts with substrate. Catalysis depends on Tyr58, which acts as the Proton donor. Position 73–75 (Gly73–Ala75) interacts with substrate.

It belongs to the PanD family. Heterooctamer of four alpha and four beta subunits. The cofactor is pyruvate. Post-translationally, is synthesized initially as an inactive proenzyme, which is activated by self-cleavage at a specific serine bond to produce a beta-subunit with a hydroxyl group at its C-terminus and an alpha-subunit with a pyruvoyl group at its N-terminus.

Its subcellular location is the cytoplasm. The enzyme catalyses L-aspartate + H(+) = beta-alanine + CO2. Its pathway is cofactor biosynthesis; (R)-pantothenate biosynthesis; beta-alanine from L-aspartate: step 1/1. Its function is as follows. Catalyzes the pyruvoyl-dependent decarboxylation of aspartate to produce beta-alanine. In Cytophaga hutchinsonii (strain ATCC 33406 / DSM 1761 / CIP 103989 / NBRC 15051 / NCIMB 9469 / D465), this protein is Aspartate 1-decarboxylase.